Reading from the N-terminus, the 237-residue chain is Ribonuclease PH (237 aa).

Phosphate-binding positions include Arg-86 and 124–126 (GTR).

Belongs to the RNase PH family. In terms of assembly, homohexameric ring arranged as a trimer of dimers.

It catalyses the reaction tRNA(n+1) + phosphate = tRNA(n) + a ribonucleoside 5'-diphosphate. Functionally, phosphorolytic 3'-5' exoribonuclease that plays an important role in tRNA 3'-end maturation. Removes nucleotide residues following the 3'-CCA terminus of tRNAs; can also add nucleotides to the ends of RNA molecules by using nucleoside diphosphates as substrates, but this may not be physiologically important. Probably plays a role in initiation of 16S rRNA degradation (leading to ribosome degradation) during starvation. The chain is Ribonuclease PH from Cereibacter sphaeroides (strain KD131 / KCTC 12085) (Rhodobacter sphaeroides).